We begin with the raw amino-acid sequence, 151 residues long: S-protein homolog 27 (151 aa).

2 N-linked (GlcNAc...) asparagine glycosylation sites follow: N91 and N123.

Belongs to the plant self-incompatibility (S1) protein family.

It is found in the secreted. The polypeptide is S-protein homolog 27 (Arabidopsis thaliana (Mouse-ear cress)).